We begin with the raw amino-acid sequence, 231 residues long: Casein kinase II subunit beta (231 aa).

This sequence belongs to the casein kinase 2 subunit beta family. Tetramer composed of two alpha chains, one beta chain and one beta' chain. Post-translationally, phosphorylated by alpha subunit.

In terms of biological role, regulatory subunit of casein kinase II/CK2. As part of the kinase complex regulates the basal catalytic activity of the alpha subunit a constitutively active serine/threonine-protein kinase that phosphorylates a large number of substrates containing acidic residues C-terminal to the phosphorylated serine or threonine. In Schizosaccharomyces pombe (strain 972 / ATCC 24843) (Fission yeast), this protein is Casein kinase II subunit beta.